The chain runs to 190 residues: ATP synthase subunit b, chloroplastic (190 aa).

The chain crosses the membrane as a helical span at residues 35–55; sequence LSVVLGVLIFFGKGVCASCLL.

Belongs to the ATPase B chain family. F-type ATPases have 2 components, F(1) - the catalytic core - and F(0) - the membrane proton channel. F(1) has five subunits: alpha(3), beta(3), gamma(1), delta(1), epsilon(1). F(0) has four main subunits: a(1), b(1), b'(1) and c(10-14). The alpha and beta chains form an alternating ring which encloses part of the gamma chain. F(1) is attached to F(0) by a central stalk formed by the gamma and epsilon chains, while a peripheral stalk is formed by the delta, b and b' chains.

The protein resides in the plastid. It localises to the chloroplast thylakoid membrane. Functionally, f(1)F(0) ATP synthase produces ATP from ADP in the presence of a proton or sodium gradient. F-type ATPases consist of two structural domains, F(1) containing the extramembraneous catalytic core and F(0) containing the membrane proton channel, linked together by a central stalk and a peripheral stalk. During catalysis, ATP synthesis in the catalytic domain of F(1) is coupled via a rotary mechanism of the central stalk subunits to proton translocation. Its function is as follows. Component of the F(0) channel, it forms part of the peripheral stalk, linking F(1) to F(0). This chain is ATP synthase subunit b, chloroplastic, found in Coffea arabica (Arabian coffee).